We begin with the raw amino-acid sequence, 485 residues long: Alginate biosynthesis protein AlgA (485 aa).

It belongs to the mannose-6-phosphate isomerase type 2 family. Monomer. Co(2+) serves as cofactor.

The catalysed reaction is D-mannose 6-phosphate = D-fructose 6-phosphate. It catalyses the reaction alpha-D-mannose 1-phosphate + GTP + H(+) = GDP-alpha-D-mannose + diphosphate. It participates in nucleotide-sugar biosynthesis; GDP-alpha-D-mannose biosynthesis; GDP-alpha-D-mannose from alpha-D-mannose 1-phosphate (GTP route): step 1/1. It functions in the pathway nucleotide-sugar biosynthesis; GDP-alpha-D-mannose biosynthesis; alpha-D-mannose 1-phosphate from D-fructose 6-phosphate: step 1/2. In terms of biological role, produces a precursor for alginate polymerization. The alginate layer provides a protective barrier against host immune defenses and antibiotics. In Pseudomonas putida (strain ATCC 47054 / DSM 6125 / CFBP 8728 / NCIMB 11950 / KT2440), this protein is Alginate biosynthesis protein AlgA (algA).